The primary structure comprises 239 residues: 1-(5-phosphoribosyl)-5-[(5-phosphoribosylamino)methylideneamino] imidazole-4-carboxamide isomerase (239 aa).

Aspartate 8 functions as the Proton acceptor in the catalytic mechanism. The Proton donor role is filled by aspartate 129.

This sequence belongs to the HisA/HisF family.

The protein resides in the cytoplasm. It catalyses the reaction 1-(5-phospho-beta-D-ribosyl)-5-[(5-phospho-beta-D-ribosylamino)methylideneamino]imidazole-4-carboxamide = 5-[(5-phospho-1-deoxy-D-ribulos-1-ylimino)methylamino]-1-(5-phospho-beta-D-ribosyl)imidazole-4-carboxamide. Its pathway is amino-acid biosynthesis; L-histidine biosynthesis; L-histidine from 5-phospho-alpha-D-ribose 1-diphosphate: step 4/9. The chain is 1-(5-phosphoribosyl)-5-[(5-phosphoribosylamino)methylideneamino] imidazole-4-carboxamide isomerase from Legionella pneumophila subsp. pneumophila (strain Philadelphia 1 / ATCC 33152 / DSM 7513).